The sequence spans 503 residues: uncharacterized protein (503 aa).

12 helical membrane passes run 20–40 (FIAFAFNYVAGFGFISVVLTM), 43–63 (LGPFSYLILGLAALGILGVML), 106–126 (VSLTGPFNGLIVPAVLVLSFA), 138–158 (LIGLLVGGFVLFGALNFISLF), 166–186 (AILFFAIVKWVVVLGGLILGI), 215–235 (VISTTVGMLVAFAGTEDLTAI), 249–269 (LLMFGAVTLLYLIGFVIISGI), 301–321 (YLGIPLLVIFGLGFLLNSLAS), 359–379 (VWASNIMTLAVMVLMIIVPFL), 405–425 (LAVLISLIQYFITYIFFFMIL), 443–463 (GVSFAIITVLLFVNLFPITAW), and 468–488 (TFKLSILAAFFALGIGFFIHS).

The protein to M.genitalium MG225.

Its subcellular location is the cell membrane. This is an uncharacterized protein from Mycoplasma pneumoniae (strain ATCC 29342 / M129 / Subtype 1) (Mycoplasmoides pneumoniae).